The primary structure comprises 48 residues: uncharacterized protein (48 aa).

Residues 25–47 (TFASIGVTVGVQIVILLIWGLSW) traverse the membrane as a helical segment.

Its subcellular location is the membrane. This is an uncharacterized protein from Archaeoglobus fulgidus (strain ATCC 49558 / DSM 4304 / JCM 9628 / NBRC 100126 / VC-16).